Here is a 297-residue protein sequence, read N- to C-terminus: Acetylglutamate kinase (297 aa).

Substrate is bound by residues 68 to 69 (GG), R90, and N195.

The protein belongs to the acetylglutamate kinase family. ArgB subfamily.

The protein resides in the cytoplasm. It catalyses the reaction N-acetyl-L-glutamate + ATP = N-acetyl-L-glutamyl 5-phosphate + ADP. It functions in the pathway amino-acid biosynthesis; L-arginine biosynthesis; N(2)-acetyl-L-ornithine from L-glutamate: step 2/4. Functionally, catalyzes the ATP-dependent phosphorylation of N-acetyl-L-glutamate. The polypeptide is Acetylglutamate kinase (Chelativorans sp. (strain BNC1)).